Here is a 209-residue protein sequence, read N- to C-terminus: MLNKQIMVDADNALAGRQEAMAVEPIHFVNGSDITASATQGQQEILFGMGCFWGAERLFWQLDGVVSTSVGYSGGFTLNPTYQEVCSGQTGHTEVVRVIFDPQVLPLEQLLEKFWERHDPTQGMRQGNDLGTQYRSAIYTFSDQQLDIALASQQAYQAALANQQHNTITTEIRPAGPYFYAETYHQQYLAKNPEGYCGLGGTGVCFPPA.

The active site involves C51.

Belongs to the MsrA Met sulfoxide reductase family.

The catalysed reaction is L-methionyl-[protein] + [thioredoxin]-disulfide + H2O = L-methionyl-(S)-S-oxide-[protein] + [thioredoxin]-dithiol. The enzyme catalyses [thioredoxin]-disulfide + L-methionine + H2O = L-methionine (S)-S-oxide + [thioredoxin]-dithiol. In terms of biological role, has an important function as a repair enzyme for proteins that have been inactivated by oxidation. Catalyzes the reversible oxidation-reduction of methionine sulfoxide in proteins to methionine. The polypeptide is Peptide methionine sulfoxide reductase MsrA (Vibrio vulnificus (strain CMCP6)).